We begin with the raw amino-acid sequence, 582 residues long: Leucine-rich repeat transmembrane neuronal protein 3 (582 aa).

Residues 1-30 (MGFNVIRLLRGSAVAVVLAPTVLLTMLSSA) form the signal peptide. Positions 31 to 61 (ERGCPKGCRCEGKMVYCESQKLQEIPSSISA) constitute an LRRNT domain. The Extracellular segment spans residues 31–420 (ERGCPKGCRC…VDTEHISFHK (390 aa)). LRR repeat units lie at residues 63-83 (CLGL…QFKG), 86-107 (QLTW…AFNG), 110-131 (RLKE…TFRP), 134-155 (NLRN…QFRG), 158-179 (KLLS…IFQD), 182-203 (NLEL…VFAG), 206-226 (RLKE…ALFP), 230-251 (SLQN…MSWT), 254-275 (SLQR…SVFQ), and 279-300 (NLQR…ILDS). A glycan (N-linked (GlcNAc...) asparagine) is linked at asparagine 126. Positions 312 to 363 (NIWECSRNICSLVNWLRSFKGLRENTIICASPKELQGVNVIDAVKNYSICGK) constitute an LRRCT domain. Asparagine 357 carries an N-linked (GlcNAc...) asparagine glycan. A disordered region spans residues 378–410 (KPTFKPKLPRPKHESKPPLPPTVGATEPSPETD). Residues 421 to 441 (IIAGSVALFLSVLVILLVMYV) form a helical membrane-spanning segment. At 442-582 (SWKRYPASMK…RISDHKPQLA (141 aa)) the chain is on the cytoplasmic side.

The protein belongs to the LRRTM family. In terms of tissue distribution, expressed in neuronal tissues.

It is found in the cell membrane. It localises to the postsynaptic cell membrane. In terms of biological role, may play a role in the development and maintenance of the vertebrate nervous system. Exhibits a limited synaptogenic activity in vitro, restricted to excitatory presynaptic differentiation. This chain is Leucine-rich repeat transmembrane neuronal protein 3 (Lrrtm3), found in Mus musculus (Mouse).